The chain runs to 156 residues: ATP synthase subunit b (156 aa).

A helical membrane pass occupies residues 7–27 (LFVQAIVFAILVWFTMKFVWP).

The protein belongs to the ATPase B chain family. In terms of assembly, F-type ATPases have 2 components, F(1) - the catalytic core - and F(0) - the membrane proton channel. F(1) has five subunits: alpha(3), beta(3), gamma(1), delta(1), epsilon(1). F(0) has three main subunits: a(1), b(2) and c(10-14). The alpha and beta chains form an alternating ring which encloses part of the gamma chain. F(1) is attached to F(0) by a central stalk formed by the gamma and epsilon chains, while a peripheral stalk is formed by the delta and b chains.

It localises to the cell inner membrane. In terms of biological role, f(1)F(0) ATP synthase produces ATP from ADP in the presence of a proton or sodium gradient. F-type ATPases consist of two structural domains, F(1) containing the extramembraneous catalytic core and F(0) containing the membrane proton channel, linked together by a central stalk and a peripheral stalk. During catalysis, ATP synthesis in the catalytic domain of F(1) is coupled via a rotary mechanism of the central stalk subunits to proton translocation. Its function is as follows. Component of the F(0) channel, it forms part of the peripheral stalk, linking F(1) to F(0). The chain is ATP synthase subunit b from Polaromonas sp. (strain JS666 / ATCC BAA-500).